The sequence spans 363 residues: Lovastatin nonaketide synthase, enoyl reductase component lovC (363 aa).

NADP(+) contacts are provided by residues 51–54, 174–177, 197–200, Tyr-215, 262–263, Thr-280, and 351–352; these read SDTK, STAT, SPHN, LN, and LS. Residues 226-272 are lovB-binding; the sequence is TYTKNNLRYALDCITNVESTTFCFAAIGRAGGHYVSLNPFPEHAATR.

It belongs to the zinc-containing alcohol dehydrogenase family. Each MAT domain from the lovB homodimer binds one lovC molecule to form the final active lovB-lovC megasynthase complex.

The catalysed reaction is holo-[lovastatin nonaketide synthase] + 9 malonyl-CoA + S-adenosyl-L-methionine + 11 NADPH + 19 H(+) = dihydromonacolin L-[lovastatin nonaketide synthase] + S-adenosyl-L-homocysteine + 9 CO2 + 11 NADP(+) + 9 CoA + 6 H2O. Its pathway is polyketide biosynthesis; lovastatin biosynthesis. Its function is as follows. Trans-enoyl reductase; part of the gene cluster that mediates the biosynthesis of lovastatin (also known as mevinolin, mevacor or monacolin K), a hypolipidemic inhibitor of (3S)-hydroxymethylglutaryl-coenzyme A (HMG-CoA) reductase (HMGR). The first step in the biosynthesis of lovastatin is the production of dihydromonacolin L acid (DML) by the lovastatin nonaketide synthase lovB and the trans-acting enoyl reductase lovC (called the lovB-lovC megasynthase complex) via condensation of one acetyl-CoA unit and 8 malonyl-CoA units. The formation of the LovB/C complex is essential for the integrity of the catalytic chamber to the complete total synthesis of DML acid. Dihydromonacolin L acid is released from lovB by the thioesterase lovG. Next, dihydromonacolin L acid is oxidized by the dihydromonacolin L monooxygenase lovA twice to form monacolin J acid. The 2-methylbutyrate moiety of lovastatin is synthesized by the lovastatin diketide synthase lovF via condensation of one acetyl-CoA unit and one malonyl-CoA unit. Finally, the covalent attachment of this moiety to monacolin J acid is catalyzed by the transesterase lovD to yield lovastatin. LovD has broad substrate specificity and can also convert monacolin J to simvastatin using alpha-dimethylbutanoyl-S-methyl-3-mercaptopropionate (DMB-S-MMP) as the thioester acyl donor, and can also catalyze the reverse reaction and function as hydrolase in vitro. LovD has much higher activity with LovF-bound 2-methylbutanoate than with free diketide substrates. The chain is Lovastatin nonaketide synthase, enoyl reductase component lovC from Aspergillus terreus.